Here is a 634-residue protein sequence, read N- to C-terminus: Factor of DNA methylation 1 (634 aa).

A coiled-coil region spans residues 288-469 (LDEKKNLHQA…LESMNSVLMT (182 aa)). A compositionally biased stretch (basic and acidic residues) spans 349 to 364 (ELDRQKLDEDKRKSDA). The disordered stretch occupies residues 349-375 (ELDRQKLDEDKRKSDAMNKSLQLASRE).

In terms of assembly, homodimer. Interacts with IDN2 and AGO4. Forms a complex with IDN2 and FMD2/INDL2. As to expression, highly expressed in flowers and at lower levels in roots, leaves and stems.

Its function is as follows. Forms a complex with IDN2 and FDM2/IDNL2 that is required for RNA-directed DNA methylation (RdDM) and that functions at a downstream step of the RdDM pathway. Required for de novo DNA methylation and 24 nucleotide small interfering RNA (siRNA) accumulation. Binds unmethylated but not methylated DNAs through its coiled-coil domain. May bind double-stranded RNAs (dsRNAs) with 5'-overhangs through its XS domain. However, according to, FMD1 does not bind dsRNAs. The protein is Factor of DNA methylation 1 of Arabidopsis thaliana (Mouse-ear cress).